Reading from the N-terminus, the 757-residue chain is Chloride channel protein C (757 aa).

The Cytoplasmic segment spans residues 1–96; sequence MGSSLNKPLS…LHLKKTFGKW (96 aa). 11 helical membrane-spanning segments follow: residues 97-117, 141-161, 196-216, 253-273, 292-312, 337-357, 378-398, 462-482, 484-504, 506-526, and 535-555; these read IICL…KMVV, FLTF…MVIV, IVSL…GPMI, FISI…IGGV, TFFT…GIGS, LLCF…FVFL, FEAL…SFIF, LLVF…LWVA, GLFV…GQTI, MWFT…AMMA, and IVVI…IILA. CBS domains follow at residues 600-667 and 710-757; these read MSKN…TGEE and MNSS…NDLF.

It belongs to the chloride channel (TC 2.A.49) family.

The protein resides in the membrane. Voltage-gated chloride channel. Chloride channels may have several functions including the regulation of cell volume, membrane potential stabilization and signal transduction. This chain is Chloride channel protein C (clcC), found in Dictyostelium discoideum (Social amoeba).